The following is a 267-amino-acid chain: L-aspartate dehydrogenase (267 aa).

Alanine 124 and asparagine 190 together coordinate NAD(+). Residue histidine 220 is part of the active site.

Belongs to the L-aspartate dehydrogenase family.

The catalysed reaction is L-aspartate + NADP(+) + H2O = oxaloacetate + NH4(+) + NADPH + H(+). The enzyme catalyses L-aspartate + NAD(+) + H2O = oxaloacetate + NH4(+) + NADH + H(+). Its pathway is cofactor biosynthesis; NAD(+) biosynthesis; iminoaspartate from L-aspartate (dehydrogenase route): step 1/1. Functionally, specifically catalyzes the NAD or NADP-dependent dehydrogenation of L-aspartate to iminoaspartate. The polypeptide is L-aspartate dehydrogenase (Pseudomonas aeruginosa (strain ATCC 15692 / DSM 22644 / CIP 104116 / JCM 14847 / LMG 12228 / 1C / PRS 101 / PAO1)).